The primary structure comprises 305 residues: tRNA pseudouridine synthase B (305 aa).

D48 functions as the Nucleophile in the catalytic mechanism.

Belongs to the pseudouridine synthase TruB family. Type 1 subfamily.

The catalysed reaction is uridine(55) in tRNA = pseudouridine(55) in tRNA. Functionally, responsible for synthesis of pseudouridine from uracil-55 in the psi GC loop of transfer RNAs. The sequence is that of tRNA pseudouridine synthase B from Pseudomonas putida (strain GB-1).